The chain runs to 249 residues: Exosome complex component Rrp41 (249 aa).

The protein belongs to the RNase PH family. Rrp41 subfamily. Component of the archaeal exosome complex. Forms a hexameric ring-like arrangement composed of 3 Rrp41-Rrp42 heterodimers. The hexameric ring associates with a trimer of Rrp4 and/or Csl4 subunits.

The protein localises to the cytoplasm. Its function is as follows. Catalytic component of the exosome, which is a complex involved in RNA degradation. Has 3'-&gt;5' exoribonuclease activity. Can also synthesize heteromeric RNA-tails. The chain is Exosome complex component Rrp41 from Pyrococcus horikoshii (strain ATCC 700860 / DSM 12428 / JCM 9974 / NBRC 100139 / OT-3).